The primary structure comprises 125 residues: Large ribosomal subunit protein bL12 (125 aa).

Belongs to the bacterial ribosomal protein bL12 family. Homodimer. Part of the ribosomal stalk of the 50S ribosomal subunit. Forms a multimeric L10(L12)X complex, where L10 forms an elongated spine to which 2 to 4 L12 dimers bind in a sequential fashion. Binds GTP-bound translation factors.

In terms of biological role, forms part of the ribosomal stalk which helps the ribosome interact with GTP-bound translation factors. Is thus essential for accurate translation. The sequence is that of Large ribosomal subunit protein bL12 from Ruthia magnifica subsp. Calyptogena magnifica.